The chain runs to 180 residues: uncharacterized protein (180 aa).

This is an uncharacterized protein from Methanocaldococcus jannaschii (strain ATCC 43067 / DSM 2661 / JAL-1 / JCM 10045 / NBRC 100440) (Methanococcus jannaschii).